Reading from the N-terminus, the 255-residue chain is Imidazole glycerol phosphate synthase subunit HisF (255 aa).

Active-site residues include D12 and D131.

This sequence belongs to the HisA/HisF family. In terms of assembly, heterodimer of HisH and HisF.

The protein localises to the cytoplasm. It catalyses the reaction 5-[(5-phospho-1-deoxy-D-ribulos-1-ylimino)methylamino]-1-(5-phospho-beta-D-ribosyl)imidazole-4-carboxamide + L-glutamine = D-erythro-1-(imidazol-4-yl)glycerol 3-phosphate + 5-amino-1-(5-phospho-beta-D-ribosyl)imidazole-4-carboxamide + L-glutamate + H(+). Its pathway is amino-acid biosynthesis; L-histidine biosynthesis; L-histidine from 5-phospho-alpha-D-ribose 1-diphosphate: step 5/9. In terms of biological role, IGPS catalyzes the conversion of PRFAR and glutamine to IGP, AICAR and glutamate. The HisF subunit catalyzes the cyclization activity that produces IGP and AICAR from PRFAR using the ammonia provided by the HisH subunit. The polypeptide is Imidazole glycerol phosphate synthase subunit HisF (Zymomonas mobilis subsp. mobilis (strain ATCC 31821 / ZM4 / CP4)).